Reading from the N-terminus, the 549-residue chain is MQADFVIIGSGSAGSALAYRLSEDGRNSVIVLEFGGSDVGPFIQMPAALAWPMSMNRYNWGYLSEPEPNLNNRRITAPRGKVIGGSSSINGMVYVRGHSEDFNRWEELGAQGWAYADVLPYYKRMEHSHGGEEGWRGTDGPLHVQRGPVKNPLFHAFIEAGKEAGFEVTEDYNGSKQEGFGLMEQTTWRGRRWSAASAYLRPALKRPNVELIRCFARKIVIENGRATGVEIERGGRIEVVKANREVIVSASSFNSPKLLMLSGIGPAAHLKEMGIDVKVDRPGVGQNLQDHMEFYFQQVSTKPVSLYSWLPWFWQGVAGAQWLFFKRGLGISNQFESCAFLRSAPGVKQPDIQYHFLPVAISYDGKAAAKSHGFQVHVGYNLSKSRGNVSLRSSDPKADPVIRFNYMSHPEDWEKFRHCVRLTREIFGQKAFDLYRGPEIQPGEKVQTDEEIDGFLREHLESAYHPCGTCKMGAKDDPMAVVDPETRVIGVDGLRVADSSIFPHITYGNLNAPSIMTGEKSADHILGRQPLARSNQEPWINPRWAVSDR.

Asp-4–Glu-33 contributes to the FAD binding site. The active-site Proton acceptor is His-465.

This sequence belongs to the GMC oxidoreductase family. Requires FAD as cofactor.

It localises to the cell membrane. The catalysed reaction is choline + A = betaine aldehyde + AH2. It catalyses the reaction betaine aldehyde + NAD(+) + H2O = glycine betaine + NADH + 2 H(+). Its pathway is amine and polyamine biosynthesis; betaine biosynthesis via choline pathway; betaine aldehyde from choline (cytochrome c reductase route): step 1/1. Involved in the biosynthesis of the osmoprotectant glycine betaine. Catalyzes the oxidation of choline to betaine aldehyde and betaine aldehyde to glycine betaine at the same rate. The chain is Oxygen-dependent choline dehydrogenase from Rhizobium meliloti (strain 1021) (Ensifer meliloti).